A 290-amino-acid chain; its full sequence is uncharacterized protein (290 aa).

6 helical membrane-spanning segments follow: residues 71-91 (FWSF…VKNI), 124-144 (GILI…LPGM), 155-175 (IIIG…YILV), 202-222 (FILV…LQLV), 234-254 (MFSI…VLTP), and 262-282 (ILLS…VLVV).

It belongs to the TatC family.

The protein resides in the plastid. The protein localises to the chloroplast membrane. This is an uncharacterized protein from Guillardia theta (Cryptophyte).